Reading from the N-terminus, the 356-residue chain is DNA polymerase IV (356 aa).

A UmuC domain is found at I6–G187. Mg(2+) is bound by residues D10 and D105. E106 is an active-site residue.

This sequence belongs to the DNA polymerase type-Y family. In terms of assembly, monomer. Mg(2+) serves as cofactor.

The protein resides in the cytoplasm. It carries out the reaction DNA(n) + a 2'-deoxyribonucleoside 5'-triphosphate = DNA(n+1) + diphosphate. In terms of biological role, poorly processive, error-prone DNA polymerase involved in untargeted mutagenesis. Copies undamaged DNA at stalled replication forks, which arise in vivo from mismatched or misaligned primer ends. These misaligned primers can be extended by PolIV. Exhibits no 3'-5' exonuclease (proofreading) activity. May be involved in translesional synthesis, in conjunction with the beta clamp from PolIII. The chain is DNA polymerase IV from Staphylococcus aureus (strain Mu50 / ATCC 700699).